Consider the following 375-residue polypeptide: Glutamate 5-kinase (375 aa).

Lys-17 serves as a coordination point for ATP. Substrate contacts are provided by Ser-57, Asp-144, and Asn-156. ATP is bound at residue 176–177 (TD). In terms of domain architecture, PUA spans 283–361 (KGRLWLDTGA…HQIEQILGYV (79 aa)).

Belongs to the glutamate 5-kinase family.

It localises to the cytoplasm. The enzyme catalyses L-glutamate + ATP = L-glutamyl 5-phosphate + ADP. Its pathway is amino-acid biosynthesis; L-proline biosynthesis; L-glutamate 5-semialdehyde from L-glutamate: step 1/2. Functionally, catalyzes the transfer of a phosphate group to glutamate to form L-glutamate 5-phosphate. The protein is Glutamate 5-kinase of Nitrosococcus oceani (strain ATCC 19707 / BCRC 17464 / JCM 30415 / NCIMB 11848 / C-107).